The primary structure comprises 218 residues: Thiamine-phosphate synthase (218 aa).

Residues 43–47 (QFRDK) and Asn78 each bind 4-amino-2-methyl-5-(diphosphooxymethyl)pyrimidine. Residues Asp79 and Asp98 each coordinate Mg(2+). Ser117 provides a ligand contact to 4-amino-2-methyl-5-(diphosphooxymethyl)pyrimidine. Residue 143-145 (TNS) coordinates 2-[(2R,5Z)-2-carboxy-4-methylthiazol-5(2H)-ylidene]ethyl phosphate. Lys146 is a binding site for 4-amino-2-methyl-5-(diphosphooxymethyl)pyrimidine. 2-[(2R,5Z)-2-carboxy-4-methylthiazol-5(2H)-ylidene]ethyl phosphate is bound by residues Gly174 and 194-195 (IS).

The protein belongs to the thiamine-phosphate synthase family. Requires Mg(2+) as cofactor.

It catalyses the reaction 2-[(2R,5Z)-2-carboxy-4-methylthiazol-5(2H)-ylidene]ethyl phosphate + 4-amino-2-methyl-5-(diphosphooxymethyl)pyrimidine + 2 H(+) = thiamine phosphate + CO2 + diphosphate. The enzyme catalyses 2-(2-carboxy-4-methylthiazol-5-yl)ethyl phosphate + 4-amino-2-methyl-5-(diphosphooxymethyl)pyrimidine + 2 H(+) = thiamine phosphate + CO2 + diphosphate. It carries out the reaction 4-methyl-5-(2-phosphooxyethyl)-thiazole + 4-amino-2-methyl-5-(diphosphooxymethyl)pyrimidine + H(+) = thiamine phosphate + diphosphate. It participates in cofactor biosynthesis; thiamine diphosphate biosynthesis; thiamine phosphate from 4-amino-2-methyl-5-diphosphomethylpyrimidine and 4-methyl-5-(2-phosphoethyl)-thiazole: step 1/1. Condenses 4-methyl-5-(beta-hydroxyethyl)thiazole monophosphate (THZ-P) and 2-methyl-4-amino-5-hydroxymethyl pyrimidine pyrophosphate (HMP-PP) to form thiamine monophosphate (TMP). The chain is Thiamine-phosphate synthase from Lactococcus lactis subsp. cremoris (strain MG1363).